The sequence spans 85 residues: Transcription factor 4 (85 aa).

The 54-residue stretch at 7–60 folds into the bHLH domain; it reads ERRMANNARERLRVRDINEAFKELGRMVQLHLKSDKPQTKLLILHQAVAVILSL. Residues 62–85 form a class A specific domain region; the sequence is QQVRERNLNPKAACLKRREEEKVS.

In terms of assembly, efficient DNA binding requires dimerization with another bHLH protein. Forms homo- or heterooligomers with myogenin.

It localises to the nucleus. Transcription factor that binds to the immunoglobulin enhancer Mu-E5/KE5-motif. Involved in the initiation of neuronal differentiation. Binds to the E-box present in the somatostatin receptor 2 initiator element (SSTR2-INR) to activate transcription. The sequence is that of Transcription factor 4 (TCF4) from Gallus gallus (Chicken).